A 374-amino-acid polypeptide reads, in one-letter code: Alpha-N-acetylgalactosaminide alpha-2,6-sialyltransferase 2 (374 aa).

The Cytoplasmic segment spans residues 1–7 (MGLPRGS). A helical; Signal-anchor for type II membrane protein transmembrane segment spans residues 8 to 28 (FFWLLLLLTAACSGLLFALYF). The Lumenal portion of the chain corresponds to 29–374 (SAVQRYPGPA…KAGILQLYQR (346 aa)). 2 disulfide bridges follow: Cys-66–Cys-148 and Cys-151–Cys-317. Asn-85 and Asn-130 each carry an N-linked (GlcNAc...) asparagine glycan. CMP-N-acetyl-beta-neuraminate is bound at residue Asn-156. N-linked (GlcNAc...) asparagine glycosylation occurs at Asn-161. CMP-N-acetyl-beta-neuraminate contacts are provided by Asn-179, Ser-304, and His-336.

The protein belongs to the glycosyltransferase 29 family. Expressed in skeletal muscle, heart, kidney, placenta, lung and leukocytes.

The protein resides in the golgi apparatus membrane. The enzyme catalyses a beta-D-galactosyl-(1-&gt;3)-N-acetyl-alpha-D-galactosaminyl derivative + CMP-N-acetyl-beta-neuraminate = a beta-D-galactosyl-(1-&gt;3)-[N-acetyl-alpha-neuraminyl-(2-&gt;6)]-N-acetyl-alpha-D-galactosaminyl derivative + CMP + H(+). It carries out the reaction a 3-O-[N-acetyl-alpha-D-galactosaminyl]-L-threonyl-[protein] + CMP-N-acetyl-beta-neuraminate = a 3-O-[N-acetyl-alpha-neuraminosyl-(2-&gt;6)-N-acetyl-alpha-D-galactosaminyl]-L-threonyl-[protein] + CMP + H(+). The catalysed reaction is a 3-O-[N-acetyl-alpha-neuraminyl-(2-&gt;3)-beta-D-galactosyl-(1-&gt;3)-N-acetyl-alpha-D-galactosaminyl]-L-threonyl-[protein] + CMP-N-acetyl-beta-neuraminate = a 3-O-{alpha-Neu5Ac-(2-&gt;3)-beta-D-Gal-(1-&gt;3)-[alpha-Neu5Ac-(2-&gt;6)]-alpha-D-GalNAc}-L-threonyl-[protein] + CMP + H(+). It participates in protein modification; protein glycosylation. Catalyzes the transfer of N-acetylneuraminyl groups onto glycan chains in glycoproteins. Conjugates sialic acid with an alpha-2-6 linkage to N-acetylgalactosamine (GalNAc) glycan chains linked to serine or threonine in glycoproteins. Sialylates alphaGalNAc- and Galbeta1-&gt;3GalNAc-O-Ser/Thr epitopes also known as Tn and T antigens. The polypeptide is Alpha-N-acetylgalactosaminide alpha-2,6-sialyltransferase 2 (ST6GALNAC2) (Homo sapiens (Human)).